A 108-amino-acid chain; its full sequence is Probable 4-amino-4-deoxy-L-arabinose-phosphoundecaprenol flippase subunit ArnE (108 aa).

3 helical membrane-spanning segments follow: residues 36–56 (SLWLALACLGSGLLIWLLVLQ), 58–78 (LDVGIAYPMLGVNFVLITLAG), and 85–105 (PVDVRHWLGIALILVGVFQLG).

Belongs to the ArnE family. Heterodimer of ArnE and ArnF.

Its subcellular location is the cell inner membrane. It functions in the pathway bacterial outer membrane biogenesis; lipopolysaccharide biosynthesis. Its function is as follows. Translocates 4-amino-4-deoxy-L-arabinose-phosphoundecaprenol (alpha-L-Ara4N-phosphoundecaprenol) from the cytoplasmic to the periplasmic side of the inner membrane. The chain is Probable 4-amino-4-deoxy-L-arabinose-phosphoundecaprenol flippase subunit ArnE from Pseudomonas syringae pv. syringae (strain B728a).